Here is a 180-residue protein sequence, read N- to C-terminus: Small ribosomal subunit protein uS5 (180 aa).

Residues M24–V87 enclose the S5 DRBM domain.

This sequence belongs to the universal ribosomal protein uS5 family. In terms of assembly, part of the 30S ribosomal subunit. Contacts proteins S4 and S8.

With S4 and S12 plays an important role in translational accuracy. In terms of biological role, located at the back of the 30S subunit body where it stabilizes the conformation of the head with respect to the body. This Stenotrophomonas maltophilia (strain R551-3) protein is Small ribosomal subunit protein uS5.